Here is a 183-residue protein sequence, read N- to C-terminus: Probable chorismate pyruvate-lyase 2 (183 aa).

Substrate contacts are provided by arginine 76, leucine 114, and glutamate 166.

It belongs to the UbiC family.

Its subcellular location is the cytoplasm. It catalyses the reaction chorismate = 4-hydroxybenzoate + pyruvate. It functions in the pathway cofactor biosynthesis; ubiquinone biosynthesis. In terms of biological role, removes the pyruvyl group from chorismate, with concomitant aromatization of the ring, to provide 4-hydroxybenzoate (4HB) for the ubiquinone pathway. This is Probable chorismate pyruvate-lyase 2 from Pseudomonas fluorescens (strain Pf0-1).